The chain runs to 340 residues: Annexin A2-B (340 aa).

The segment at 2 to 25 (ALIHEILGKLSLEGNQSSSRQSKL) is P10 binding site. A Phosphoserine; by PKC modification is found at Ser27. Annexin repeat units lie at residues 34 to 105 (FDAE…GLIK), 106 to 177 (TRPQ…ALAK), 190 to 262 (EKID…NLVQ), and 266 to 337 (NKPL…NLCG).

It belongs to the annexin family. In terms of assembly, tetramer of 2 light chains (p10 proteins) and 2 heavy chains (p36 proteins). In terms of tissue distribution, adult brain, heart, striated muscle, liver, kidney, and very high levels in skin.

The protein localises to the secreted. It localises to the extracellular space. Its subcellular location is the extracellular matrix. It is found in the basement membrane. In terms of biological role, calcium-regulated membrane-binding protein whose affinity for calcium is greatly enhanced by anionic phospholipids. It binds two calcium ions with high affinity. This chain is Annexin A2-B (anxa2-b), found in Xenopus laevis (African clawed frog).